We begin with the raw amino-acid sequence, 342 residues long: Phosphate acyltransferase (342 aa).

It belongs to the PlsX family. Homodimer. Probably interacts with PlsY.

Its subcellular location is the cytoplasm. The enzyme catalyses a fatty acyl-[ACP] + phosphate = an acyl phosphate + holo-[ACP]. Its pathway is lipid metabolism; phospholipid metabolism. Its function is as follows. Catalyzes the reversible formation of acyl-phosphate (acyl-PO(4)) from acyl-[acyl-carrier-protein] (acyl-ACP). This enzyme utilizes acyl-ACP as fatty acyl donor, but not acyl-CoA. In Blochmanniella pennsylvanica (strain BPEN), this protein is Phosphate acyltransferase.